A 239-amino-acid chain; its full sequence is Probable transcriptional regulatory protein Tcr_1104 (239 aa).

The protein belongs to the TACO1 family.

The protein localises to the cytoplasm. This chain is Probable transcriptional regulatory protein Tcr_1104, found in Hydrogenovibrio crunogenus (strain DSM 25203 / XCL-2) (Thiomicrospira crunogena).